We begin with the raw amino-acid sequence, 258 residues long: Type III pantothenate kinase (258 aa).

6-13 (DVGNTNIV) is an ATP binding site. Substrate contacts are provided by residues Y100 and 107–110 (GADR). D109 acts as the Proton acceptor in catalysis. Position 129 (D129) interacts with K(+). T132 contacts ATP. Residue T184 participates in substrate binding.

It belongs to the type III pantothenate kinase family. As to quaternary structure, homodimer. NH4(+) serves as cofactor. K(+) is required as a cofactor.

The protein localises to the cytoplasm. The catalysed reaction is (R)-pantothenate + ATP = (R)-4'-phosphopantothenate + ADP + H(+). It participates in cofactor biosynthesis; coenzyme A biosynthesis; CoA from (R)-pantothenate: step 1/5. Its function is as follows. Catalyzes the phosphorylation of pantothenate (Pan), the first step in CoA biosynthesis. The sequence is that of Type III pantothenate kinase from Desulfitobacterium hafniense (strain DSM 10664 / DCB-2).